The following is a 464-amino-acid chain: Gamma-aminobutyric acid receptor subunit alpha-5 (464 aa).

The N-terminal stretch at 1–25 is a signal peptide; the sequence is MDNGMLSRFIMTKTLLVFCISMTLS. Over 26 to 260 the chain is Extracellular; sequence SHFGFSQMPT…FHLKRKIGYF (235 aa). An N-linked (GlcNAc...) asparagine glycan is attached at N45. Residue R101 participates in 4-aminobutanoate binding. N-linked (GlcNAc...) asparagine glycosylation occurs at N145. A 4-aminobutanoate-binding site is contributed by T164. The cysteines at positions 173 and 187 are disulfide-linked. N-linked (GlcNAc...) asparagine glycosylation is found at N207 and N236. Helical transmembrane passes span 261-281, 287-308, and 319-340; these read VIQT…SFWL, PART…ISAR, and AMDW…EFAT. The Cytoplasmic segment spans residues 341 to 429; the sequence is VNYFTKRGWA…TYNSISKIDK (89 aa). Residue K355 forms a Glycyl lysine isopeptide (Lys-Gly) (interchain with G-Cter in ubiquitin) linkage. The disordered stretch occupies residues 382–414; the sequence is KLTHPPNIPKEQLPGGTGNAVGTASIRASEEKT. Residues 430–450 form a helical membrane-spanning segment; it reads MSRIVFPILFGTFNLVYWATY.

The protein belongs to the ligand-gated ion channel (TC 1.A.9) family. Gamma-aminobutyric acid receptor (TC 1.A.9.5) subfamily. GABRA5 sub-subfamily. Heteropentamer, formed by a combination of alpha (GABRA1-6), beta (GABRB1-3), gamma (GABRG1-3), delta (GABRD), epsilon (GABRE), rho (GABRR1-3), pi (GABRP) and theta (GABRQ) chains, each subunit exhibiting distinct physiological and pharmacological properties. In terms of tissue distribution, expressed in brain areas such as cerebral cortex, hippocampal formation and olfactory bulb granular layer.

It localises to the postsynaptic cell membrane. The protein localises to the cell membrane. It catalyses the reaction chloride(in) = chloride(out). With respect to regulation, allosterically potentiated by alphaxalone. Allosterically inhibited by pregnenolone sulfate. Inhibited by zinc and lanthanum. Functionally, alpha subunit of the heteropentameric ligand-gated chloride channel gated by gamma-aminobutyric acid (GABA), a major inhibitory neurotransmitter in the brain. GABA-gated chloride channels, also named GABA(A) receptors (GABAAR), consist of five subunits arranged around a central pore and contain GABA active binding site(s) located at the alpha and beta subunit interface(s). When activated by GABA, GABAARs selectively allow the flow of chloride anions across the cell membrane down their electrochemical gradient. GABAARs containing alpha-5/GABRA5 subunits are mainly extrasynaptic and contribute to the tonic GABAergic inhibition in the hippocampus. Extrasynaptic alpha-5-containing GABAARs in CA1 pyramidal neurons play a role in learning and memory processes. The polypeptide is Gamma-aminobutyric acid receptor subunit alpha-5 (Rattus norvegicus (Rat)).